We begin with the raw amino-acid sequence, 674 residues long: DNA ligase (674 aa).

Residues aspartate 35–aspartate 39, serine 82–leucine 83, and glutamate 116 contribute to the NAD(+) site. The N6-AMP-lysine intermediate role is filled by lysine 118. NAD(+) contacts are provided by arginine 139, glutamate 174, lysine 282, and lysine 306. Positions 400, 403, 418, and 424 each coordinate Zn(2+). Residues serine 593–valine 674 enclose the BRCT domain.

This sequence belongs to the NAD-dependent DNA ligase family. LigA subfamily. The cofactor is Mg(2+). Requires Mn(2+) as cofactor.

It carries out the reaction NAD(+) + (deoxyribonucleotide)n-3'-hydroxyl + 5'-phospho-(deoxyribonucleotide)m = (deoxyribonucleotide)n+m + AMP + beta-nicotinamide D-nucleotide.. Its function is as follows. DNA ligase that catalyzes the formation of phosphodiester linkages between 5'-phosphoryl and 3'-hydroxyl groups in double-stranded DNA using NAD as a coenzyme and as the energy source for the reaction. It is essential for DNA replication and repair of damaged DNA. The protein is DNA ligase of Ehrlichia ruminantium (strain Welgevonden).